Consider the following 500-residue polypeptide: Lysine--tRNA ligase (500 aa).

Mg(2+) contacts are provided by glutamate 410 and glutamate 417.

This sequence belongs to the class-II aminoacyl-tRNA synthetase family. Homodimer. The cofactor is Mg(2+).

It is found in the cytoplasm. It carries out the reaction tRNA(Lys) + L-lysine + ATP = L-lysyl-tRNA(Lys) + AMP + diphosphate. The protein is Lysine--tRNA ligase of Pseudomonas putida (strain W619).